The primary structure comprises 78 residues: DNA-directed RNA polymerase subunit Rpo5 (78 aa).

The protein belongs to the archaeal Rpo5/eukaryotic RPB5 RNA polymerase subunit family. As to quaternary structure, part of the RNA polymerase complex.

The protein localises to the cytoplasm. The catalysed reaction is RNA(n) + a ribonucleoside 5'-triphosphate = RNA(n+1) + diphosphate. In terms of biological role, DNA-dependent RNA polymerase (RNAP) catalyzes the transcription of DNA into RNA using the four ribonucleoside triphosphates as substrates. The protein is DNA-directed RNA polymerase subunit Rpo5 of Methanosarcina mazei (strain ATCC BAA-159 / DSM 3647 / Goe1 / Go1 / JCM 11833 / OCM 88) (Methanosarcina frisia).